Reading from the N-terminus, the 285-residue chain is Ubiquinone biosynthesis protein COQ4, mitochondrial (285 aa).

The N-terminal 11 residues, 1–11, are a transit peptide targeting the mitochondrion; it reads MPPTVRQGIRT. 4 residues coordinate Zn(2+): His166, Asp167, His170, and Glu182.

The protein belongs to the COQ4 family. Component of a multi-subunit COQ enzyme complex, composed of at least COQ3, COQ4, COQ5, COQ6, COQ7 and COQ9. Zn(2+) is required as a cofactor.

Its subcellular location is the mitochondrion inner membrane. It catalyses the reaction a 4-hydroxy-3-methoxy-5-(all-trans-polyprenyl)benzoate + H(+) = a 2-methoxy-6-(all-trans-polyprenyl)phenol + CO2. It functions in the pathway cofactor biosynthesis; ubiquinone biosynthesis. Functionally, lyase that catalyzes the C1-decarboxylation of 4-hydroxy-3-methoxy-5-(all-trans-polyprenyl)benzoic acid into 2-methoxy-6-(all-trans-polyprenyl)phenol during ubiquinone biosynthesis. This Paracoccidioides brasiliensis (strain Pb18) protein is Ubiquinone biosynthesis protein COQ4, mitochondrial.